Consider the following 404-residue polypeptide: Zinc finger protein zfs1 (404 aa).

Over residues 134–149 (SYLHSGSSPHGNTSNH) the composition is skewed to polar residues. 2 disordered regions span residues 134 to 168 (SYLH…TGSG) and 259 to 322 (SNAS…APNG). The segment covering 150-168 (PSPISSLESLPSRSSTGSG) has biased composition (low complexity). A compositionally biased stretch (polar residues) spans 259 to 283 (SNASIRNAPSNLSKQFSPSGNSPLT). Low complexity predominate over residues 304–317 (GSASHPHGSGSSNG). 2 C3H1-type zinc fingers span residues 326-354 (LYKT…HGNQ) and 364-392 (KYKS…HDES).

In terms of assembly, interacts with moc3.

It is found in the cytoplasm. The protein resides in the nucleus. Binds to specific AU-rich elements (ARE) in the 3'-untranslated region of target mRNAs and promotes their degradation. Binds to ARE present in the arz1 mRNA and stimulates the rate of arz1 mRNA decay. Required for coordination of septum formation with exit from mitosis. Involved in the mating response pathway. Induces sexual development and ascus formation. This Schizosaccharomyces pombe (strain 972 / ATCC 24843) (Fission yeast) protein is Zinc finger protein zfs1 (zfs1).